We begin with the raw amino-acid sequence, 338 residues long: tRNA N6-adenosine threonylcarbamoyltransferase (338 aa).

The Fe cation site is built by His-111 and His-115. Substrate-binding positions include 134–138, Asp-167, Gly-180, and Asn-272; that span reads LVSGG. A Fe cation-binding site is contributed by Asp-300.

It belongs to the KAE1 / TsaD family. Fe(2+) serves as cofactor.

It is found in the cytoplasm. The enzyme catalyses L-threonylcarbamoyladenylate + adenosine(37) in tRNA = N(6)-L-threonylcarbamoyladenosine(37) in tRNA + AMP + H(+). In terms of biological role, required for the formation of a threonylcarbamoyl group on adenosine at position 37 (t(6)A37) in tRNAs that read codons beginning with adenine. Is involved in the transfer of the threonylcarbamoyl moiety of threonylcarbamoyl-AMP (TC-AMP) to the N6 group of A37, together with TsaE and TsaB. TsaD likely plays a direct catalytic role in this reaction. In Vibrio parahaemolyticus serotype O3:K6 (strain RIMD 2210633), this protein is tRNA N6-adenosine threonylcarbamoyltransferase.